The chain runs to 67 residues: N-(5'-phosphoribosyl)anthranilate isomerase (67 aa).

This sequence belongs to the TrpF family.

It catalyses the reaction N-(5-phospho-beta-D-ribosyl)anthranilate = 1-(2-carboxyphenylamino)-1-deoxy-D-ribulose 5-phosphate. It functions in the pathway amino-acid biosynthesis; L-tryptophan biosynthesis; L-tryptophan from chorismate: step 3/5. The sequence is that of N-(5'-phosphoribosyl)anthranilate isomerase (trpF) from Methanococcus voltae.